Reading from the N-terminus, the 216-residue chain is Adenylate kinase (216 aa).

10-15 (GAGKGT) provides a ligand contact to ATP. The interval 30 to 59 (STGDIFRKNIKEGTELGKKAKEYMDQGLLV) is NMP. AMP contacts are provided by residues T31, R36, 57–59 (LLV), 85–88 (GFPR), and Q92. Positions 126–163 (GRRICKSCGATYHVEFNPPKVEGVCDVCQGELYQRADD) are LID. R127 contributes to the ATP binding site. Positions 130 and 133 each coordinate Zn(2+). 136–137 (TY) is an ATP binding site. 2 residues coordinate Zn(2+): C150 and C153. AMP is bound by residues R160 and R171. Q199 lines the ATP pocket.

This sequence belongs to the adenylate kinase family. As to quaternary structure, monomer.

The protein resides in the cytoplasm. The catalysed reaction is AMP + ATP = 2 ADP. Its pathway is purine metabolism; AMP biosynthesis via salvage pathway; AMP from ADP: step 1/1. Catalyzes the reversible transfer of the terminal phosphate group between ATP and AMP. Plays an important role in cellular energy homeostasis and in adenine nucleotide metabolism. This is Adenylate kinase from Clostridioides difficile (strain 630) (Peptoclostridium difficile).